A 687-amino-acid chain; its full sequence is Ferric vulnibactin receptor VuuA (687 aa).

A signal peptide spans 1-37 (MAALRPARTSVAEKKTFKLHALSAVVMGLCASGQAYA). In terms of domain architecture, TBDR plug spans 63 to 185 (TIYDTSSSVQ…SAGAIVMKTN (123 aa)). Residues 190-687 (HFESAVKAGV…MIGASLQLNF (498 aa)) form the TBDR beta-barrel domain. Residues 670–687 (EPLKQQPRMIGASLQLNF) carry the TonB C-terminal box motif.

It belongs to the TonB-dependent receptor family.

Its subcellular location is the cell outer membrane. In terms of biological role, involved in the uptake of iron in complex with vulnibactin, a catecholate siderophore synthesized by V.vulnificus. Binds and transports ferric vulnibactin across the outer membrane. The energy source is provided by the inner membrane TonB system. In Vibrio vulnificus, this protein is Ferric vulnibactin receptor VuuA.